The primary structure comprises 349 residues: Putative methylesterase 12, chloroplastic (349 aa).

The N-terminal 77 residues, methionine 1–leucine 77, are a transit peptide targeting the chloroplast. Positions glycine 61 to serine 80 are disordered. Serine 173 (acyl-ester intermediate) is an active-site residue. Active-site charge relay system residues include aspartate 300 and histidine 328.

The protein belongs to the AB hydrolase superfamily. Methylesterase family.

It localises to the plastid. It is found in the chloroplast. Putative methylesterase. The polypeptide is Putative methylesterase 12, chloroplastic (Arabidopsis thaliana (Mouse-ear cress)).